We begin with the raw amino-acid sequence, 1014 residues long: Isoleucine--tRNA ligase (1014 aa).

The 'HIGH' region signature appears at 48-58; sequence PTANGRPGIHH. Positions 628–632 match the 'KMSKS' region motif; sequence KMSKS. Lys631 contacts ATP.

It belongs to the class-I aminoacyl-tRNA synthetase family. IleS type 2 subfamily. As to quaternary structure, monomer. Zn(2+) is required as a cofactor.

It localises to the cytoplasm. It carries out the reaction tRNA(Ile) + L-isoleucine + ATP = L-isoleucyl-tRNA(Ile) + AMP + diphosphate. Catalyzes the attachment of isoleucine to tRNA(Ile). As IleRS can inadvertently accommodate and process structurally similar amino acids such as valine, to avoid such errors it has two additional distinct tRNA(Ile)-dependent editing activities. One activity is designated as 'pretransfer' editing and involves the hydrolysis of activated Val-AMP. The other activity is designated 'posttransfer' editing and involves deacylation of mischarged Val-tRNA(Ile). The protein is Isoleucine--tRNA ligase of Dehalococcoides mccartyi (strain ATCC BAA-2266 / KCTC 15142 / 195) (Dehalococcoides ethenogenes (strain 195)).